A 353-amino-acid polypeptide reads, in one-letter code: Quinolinate synthase (353 aa).

Histidine 47 and serine 68 together coordinate iminosuccinate. Cysteine 113 is a [4Fe-4S] cluster binding site. Iminosuccinate is bound by residues 139–141 and serine 156; that span reads YAN. Position 200 (cysteine 200) interacts with [4Fe-4S] cluster. Residues 226–228 and threonine 243 each bind iminosuccinate; that span reads HPE. Cysteine 297 provides a ligand contact to [4Fe-4S] cluster.

Belongs to the quinolinate synthase family. Type 1 subfamily. It depends on [4Fe-4S] cluster as a cofactor.

It is found in the cytoplasm. It catalyses the reaction iminosuccinate + dihydroxyacetone phosphate = quinolinate + phosphate + 2 H2O + H(+). It functions in the pathway cofactor biosynthesis; NAD(+) biosynthesis; quinolinate from iminoaspartate: step 1/1. In terms of biological role, catalyzes the condensation of iminoaspartate with dihydroxyacetone phosphate to form quinolinate. This chain is Quinolinate synthase, found in Pectobacterium atrosepticum (strain SCRI 1043 / ATCC BAA-672) (Erwinia carotovora subsp. atroseptica).